A 412-amino-acid polypeptide reads, in one-letter code: MMRSSSLQKNIMLLRVGSKDSTRFRILILNFGPQHPASHGVLRLVIVIIGEVVTKLDPHIGFLHRGTERLVEEHSYMNAAVFMDRLDYTTVLTQTHAYCLAVEQALAKSRLCIRTQLLRTIFDELSRILNHLLSIATHALDIGTMAMLFWAFEDRERIMELYEYISGARMHTALYYPNQTLDHILTNELLAKILIFSRNSEKTYTEIYIALYNNRVWRLRLCGIGVVSTEISTSTTISGPVARSTGLQLDMRSGENYQYGYYASLTLRIFLGISGDSFDRFIIRLRELFESTRLIYNSLIELSAYINISVYNMCSYSNNPHLKIESLIELFRYSLGEYLLNISLVSGFVESGKGIFGIMLAANNTNRPYRLYIRSPAYMHLQLLPKLGAGHHIADLATLLGSIDVVFGEVDR.

It belongs to the complex I 49 kDa subunit family.

Its subcellular location is the hydrogenosome. It carries out the reaction a ubiquinone + NADH + 5 H(+)(in) = a ubiquinol + NAD(+) + 4 H(+)(out). Transfer of electrons from NADH to the respiratory chain. The immediate electron acceptor for the enzyme is believed to be ubiquinone. Component of the iron-sulfur (IP) fragment of the enzyme. The polypeptide is NADH-ubiquinone oxidoreductase 49 kDa subunit (nad7) (Nyctotherus ovalis).